A 111-amino-acid polypeptide reads, in one-letter code: Probable 4-amino-4-deoxy-L-arabinose-phosphoundecaprenol flippase subunit ArnE (111 aa).

Residues 1–35 are Cytoplasmic-facing; that stretch reads MIWLTLVFASLLSVAGQLCQKQATCFVAISKRRKH. A helical transmembrane segment spans residues 36 to 56; that stretch reads IVLWLGLALACLGLAMVLWLL. An EamA domain is found at 40–109; it reads LGLALACLGL…IIGGIVILGS (70 aa). Over 57 to 60 the chain is Periplasmic; the sequence is VLQN. A helical transmembrane segment spans residues 61–81; it reads VPVGIAYPMLSLNFVWVTLAA. The Cytoplasmic portion of the chain corresponds to 82 to 87; that stretch reads VKLWHE. A helical transmembrane segment spans residues 88–108; the sequence is PVSPRHWCGVAFIIGGIVILG. Residues 109-111 lie on the Periplasmic side of the membrane; that stretch reads STV.

Belongs to the ArnE family. In terms of assembly, heterodimer of ArnE and ArnF.

The protein resides in the cell inner membrane. The protein operates within bacterial outer membrane biogenesis; lipopolysaccharide biosynthesis. Its function is as follows. Translocates 4-amino-4-deoxy-L-arabinose-phosphoundecaprenol (alpha-L-Ara4N-phosphoundecaprenol) from the cytoplasmic to the periplasmic side of the inner membrane. This chain is Probable 4-amino-4-deoxy-L-arabinose-phosphoundecaprenol flippase subunit ArnE, found in Escherichia coli O157:H7.